The primary structure comprises 598 residues: Auxin response factor 22 (598 aa).

The segment at residues Asn-124 to Gly-226 is a DNA-binding region (TF-B3). The 82-residue stretch at Arg-509–Arg-590 folds into the PB1 domain.

This sequence belongs to the ARF family. Homodimers and heterodimers.

The protein localises to the nucleus. In terms of biological role, auxin response factors (ARFs) are transcriptional factors that bind specifically to the DNA sequence 5'-TGTCTC-3' found in the auxin-responsive promoter elements (AuxREs). Could act as transcriptional activator or repressor. Formation of heterodimers with Aux/IAA proteins may alter their ability to modulate early auxin response genes expression. The sequence is that of Auxin response factor 22 (ARF22) from Arabidopsis thaliana (Mouse-ear cress).